The following is a 319-amino-acid chain: Transcription factor jun-1 (319 aa).

Disordered stretches follow at residues 1-52 (MEED…EKES) and 216-264 (NGVN…CRQK). Over residues 8–19 (PPSSSTSSESPE) the composition is skewed to low complexity. The segment covering 28–38 (PTRRRKNSKKD) has biased composition (basic residues). A basic motif region spans residues 244–285 (KKKLERKRARNRQAATKCRQKKMDRIKELEEQVLHEKHRGQR). In terms of domain architecture, bZIP spans 244–307 (KKKLERKRAR…EHFRRTVEHH (64 aa)). The interval 286–293 (LDAELLEL) is leucine-zipper.

The protein belongs to the bZIP family. Jun subfamily. Heterodimer; with fos-1. As to expression, isoform a, isoform b, isoform c and isoform d are expressed in the spermatheca.

It is found in the nucleus. Transcription factor that recognizes and binds to the AP-1 non-canonical enhancer heptamer motif 5'-TTAGTCA-3'. Required for ovulation. Controls plc-1 expression in the spermatheca to regulate spermathecal valve dilation. The polypeptide is Transcription factor jun-1 (Caenorhabditis elegans).